The following is a 255-amino-acid chain: Type III pantothenate kinase (255 aa).

6-13 (DVGNTNIV) provides a ligand contact to ATP. Substrate is bound by residues Tyr100 and 107–110 (GADR). The active-site Proton acceptor is Asp109. Asp129 contacts K(+). Thr132 serves as a coordination point for ATP. Thr184 serves as a coordination point for substrate.

The protein belongs to the type III pantothenate kinase family. As to quaternary structure, homodimer. NH4(+) is required as a cofactor. K(+) serves as cofactor.

Its subcellular location is the cytoplasm. It carries out the reaction (R)-pantothenate + ATP = (R)-4'-phosphopantothenate + ADP + H(+). The protein operates within cofactor biosynthesis; coenzyme A biosynthesis; CoA from (R)-pantothenate: step 1/5. Functionally, catalyzes the phosphorylation of pantothenate (Pan), the first step in CoA biosynthesis. This is Type III pantothenate kinase from Geobacter sulfurreducens (strain ATCC 51573 / DSM 12127 / PCA).